Consider the following 284-residue polypeptide: RNase adapter protein RapZ (284 aa).

8–15 serves as a coordination point for ATP; that stretch reads GRSGSGKS. Residue 56–59 participates in GTP binding; the sequence is DVRN. The tract at residues 266–284 is RNA-binding; the sequence is RSRGKNVQSRHRTLEKRKT.

Belongs to the RapZ-like family. RapZ subfamily. As to quaternary structure, homotrimer.

Modulates the synthesis of GlmS, by affecting the processing and stability of the regulatory small RNA GlmZ. When glucosamine-6-phosphate (GlcN6P) concentrations are high in the cell, RapZ binds GlmZ and targets it to cleavage by RNase E. Consequently, GlmZ is inactivated and unable to activate GlmS synthesis. Under low GlcN6P concentrations, RapZ is sequestered and inactivated by an other regulatory small RNA, GlmY, preventing GlmZ degradation and leading to synthesis of GlmS. This Escherichia fergusonii (strain ATCC 35469 / DSM 13698 / CCUG 18766 / IAM 14443 / JCM 21226 / LMG 7866 / NBRC 102419 / NCTC 12128 / CDC 0568-73) protein is RNase adapter protein RapZ.